Consider the following 178-residue polypeptide: Fimbrial adapter PapK (178 aa).

An N-terminal signal peptide occupies residues 1-21 (MIKSTGALLLFAALSAGQAIA).

It is found in the secreted. The protein localises to the fimbrium. In terms of biological role, adapter that links the pilus rod to the base of the tip fibrillum. Regulates the length of the tip fibrillum and joins it to the pilus rod. Pili are polar filaments radiating from the surface of the bacterium to a length of 0.5-1.5 micrometers and numbering 100-300 per cell, and enable bacteria to colonize the epithelium of specific host organs. In Escherichia coli O6:H1 (strain CFT073 / ATCC 700928 / UPEC), this protein is Fimbrial adapter PapK (papK).